Here is a 320-residue protein sequence, read N- to C-terminus: Apolipoprotein E (320 aa).

Positions 1–18 (MKVLWAAFLVAFLAGCQG) are cleaved as a signal peptide. 8 tandem repeats follow at residues 82-103 (ALMD…EQLS), 104-125 (PVAE…ARLG), 126-147 (ADME…AMLG), 148-169 (QSTD…KRLL), 170-191 (RDVD…EGAE), 192-213 (RGVS…ARAA), 214-236 (TVGS…ERLR), and 237-258 (ARME…EQVE). An 8 X 22 AA approximate tandem repeats region spans residues 82–199 (ALMDETMKEL…AERGVSAIRE (118 aa)). A Methionine sulfoxide modification is found at methionine 145. Serine 149 carries the post-translational modification Phosphoserine. The interval 160 to 170 (HLRKLRKRLLR) is LDL and other lipoprotein receptors binding. Position 164–167 (164–167 (LRKR)) interacts with heparin. The segment at 212 to 293 (AATVGSSLAS…SWFEPLVEDM (82 aa)) is lipid-binding and lipoprotein association. 232–239 (GERLRARM) contributes to the heparin binding site. Residues 269–320 (QQMRLQAEAFQARLKSWFEPLVEDMQRQWAGLVEKVQAAVGASATPVPSDNH) form a homooligomerization region. The segment at 281–293 (RLKSWFEPLVEDM) is specificity for association with VLDL.

Belongs to the apolipoprotein A1/A4/E family. In terms of assembly, homotetramer. May interact with ABCA1; functionally associated with ABCA1 in the biogenesis of HDLs. May interact with APP/A4 amyloid-beta peptide; the interaction is extremely stable in vitro but its physiological significance is unclear. May interact with MAPT. May interact with MAP2. In the cerebrospinal fluid, interacts with secreted SORL1. Interacts with PMEL; this allows the loading of PMEL luminal fragment on ILVs to induce fibril nucleation. In terms of processing, APOE exists as multiple glycosylated and sialylated glycoforms within cells and in plasma. The extent of glycosylation and sialylation are tissue and context specific. Glycated in plasma VLDL. Post-translationally, phosphorylated by FAM20C in the extracellular medium.

The protein resides in the secreted. It is found in the extracellular space. It localises to the extracellular matrix. Its subcellular location is the extracellular vesicle. The protein localises to the endosome. The protein resides in the multivesicular body. Functionally, APOE is an apolipoprotein, a protein associating with lipid particles, that mainly functions in lipoprotein-mediated lipid transport between organs via the plasma and interstitial fluids. APOE is a core component of plasma lipoproteins and is involved in their production, conversion and clearance. Apolipoproteins are amphipathic molecules that interact both with lipids of the lipoprotein particle core and the aqueous environment of the plasma. As such, APOE associates with chylomicrons, chylomicron remnants, very low density lipoproteins (VLDL) and intermediate density lipoproteins (IDL) but shows a preferential binding to high-density lipoproteins (HDL). It also binds a wide range of cellular receptors including the LDL receptor/LDLR, the LDL receptor-related proteins LRP1, LRP2 and LRP8 and the very low-density lipoprotein receptor/VLDLR that mediate the cellular uptake of the APOE-containing lipoprotein particles. Finally, APOE also has a heparin-binding activity and binds heparan-sulfate proteoglycans on the surface of cells, a property that supports the capture and the receptor-mediated uptake of APOE-containing lipoproteins by cells. A main function of APOE is to mediate lipoprotein clearance through the uptake of chylomicrons, VLDLs, and HDLs by hepatocytes. APOE is also involved in the biosynthesis by the liver of VLDLs as well as their uptake by peripheral tissues ensuring the delivery of triglycerides and energy storage in muscle, heart and adipose tissues. By participating in the lipoprotein-mediated distribution of lipids among tissues, APOE plays a critical role in plasma and tissues lipid homeostasis. APOE is also involved in two steps of reverse cholesterol transport, the HDLs-mediated transport of cholesterol from peripheral tissues to the liver, and thereby plays an important role in cholesterol homeostasis. First, it is functionally associated with ABCA1 in the biogenesis of HDLs in tissues. Second, it is enriched in circulating HDLs and mediates their uptake by hepatocytes. APOE also plays an important role in lipid transport in the central nervous system, regulating neuron survival and sprouting. The protein is Apolipoprotein E (APOE) of Saimiri boliviensis boliviensis (Bolivian squirrel monkey).